We begin with the raw amino-acid sequence, 225 residues long: Urease accessory protein UreG 2 (225 aa).

31 to 38 (GPVGSGKT) contributes to the GTP binding site.

This sequence belongs to the SIMIBI class G3E GTPase family. UreG subfamily. As to quaternary structure, homodimer. UreD, UreF and UreG form a complex that acts as a GTP-hydrolysis-dependent molecular chaperone, activating the urease apoprotein by helping to assemble the nickel containing metallocenter of UreC. The UreE protein probably delivers the nickel.

It is found in the cytoplasm. In terms of biological role, facilitates the functional incorporation of the urease nickel metallocenter. This process requires GTP hydrolysis, probably effectuated by UreG. In Streptomyces griseus subsp. griseus (strain JCM 4626 / CBS 651.72 / NBRC 13350 / KCC S-0626 / ISP 5235), this protein is Urease accessory protein UreG 2.